Here is a 474-residue protein sequence, read N- to C-terminus: ATP synthase subunit beta 2 (474 aa).

Residue G151 to T158 participates in ATP binding.

This sequence belongs to the ATPase alpha/beta chains family. F-type ATPases have 2 components, CF(1) - the catalytic core - and CF(0) - the membrane proton channel. CF(1) has five subunits: alpha(3), beta(3), gamma(1), delta(1), epsilon(1). CF(0) has four main subunits: a(1), b(1), b'(1) and c(9-12).

It is found in the cell inner membrane. It catalyses the reaction ATP + H2O + 4 H(+)(in) = ADP + phosphate + 5 H(+)(out). Its function is as follows. Produces ATP from ADP in the presence of a proton gradient across the membrane. The catalytic sites are hosted primarily by the beta subunits. The chain is ATP synthase subunit beta 2 from Dinoroseobacter shibae (strain DSM 16493 / NCIMB 14021 / DFL 12).